The chain runs to 360 residues: Putative F-box protein At5g55150 (360 aa).

In terms of domain architecture, F-box spans 6–54; sequence SSWSEFLPELLNTVFHNLNDARDILNCATVCSSWKDSSSAVYYSRTFSP.

In Arabidopsis thaliana (Mouse-ear cress), this protein is Putative F-box protein At5g55150.